Consider the following 155-residue polypeptide: Molybdopterin synthase catalytic subunit 2 (155 aa).

Substrate contacts are provided by residues 101–102 (HR), Lys117, and 124–126 (KKE).

Belongs to the MoaE family. MOCS2B subfamily. In terms of assembly, heterotetramer; composed of 2 small (MOCS2A) and 2 large (MOCS2B) subunits.

It localises to the cytoplasm. The catalysed reaction is 2 [molybdopterin-synthase sulfur-carrier protein]-C-terminal-Gly-aminoethanethioate + cyclic pyranopterin phosphate + H2O = molybdopterin + 2 [molybdopterin-synthase sulfur-carrier protein]-C-terminal Gly-Gly + 2 H(+). The protein operates within cofactor biosynthesis; molybdopterin biosynthesis. Catalytic subunit of the molybdopterin synthase complex, a complex that catalyzes the conversion of precursor Z into molybdopterin. Acts by mediating the incorporation of 2 sulfur atoms from thiocarboxylated MOCS2A into precursor Z to generate a dithiolene group. In Aedes aegypti (Yellowfever mosquito), this protein is Molybdopterin synthase catalytic subunit 2.